Here is a 156-residue protein sequence, read N- to C-terminus: Lipoprotein signal peptidase (156 aa).

4 helical membrane passes run 8 to 28, 39 to 59, 67 to 87, and 99 to 119; these read IYINIIFFIITVDFYSKKWIL, VFFILNLFHVHNFGAAFSILS, YFLLIFSIIIILAIIKIMIKF, and SLILAGAIGNLIDRINYGFVI. Catalysis depends on residues Asp120 and Asp138. A helical membrane pass occupies residues 129–149; that stretch reads WHFATFNIADFSIFIGMIMII.

The protein belongs to the peptidase A8 family.

It localises to the cell inner membrane. The catalysed reaction is Release of signal peptides from bacterial membrane prolipoproteins. Hydrolyzes -Xaa-Yaa-Zaa-|-(S,diacylglyceryl)Cys-, in which Xaa is hydrophobic (preferably Leu), and Yaa (Ala or Ser) and Zaa (Gly or Ala) have small, neutral side chains.. It functions in the pathway protein modification; lipoprotein biosynthesis (signal peptide cleavage). In terms of biological role, this protein specifically catalyzes the removal of signal peptides from prolipoproteins. In Buchnera aphidicola subsp. Schizaphis graminum (strain Sg), this protein is Lipoprotein signal peptidase.